Consider the following 489-residue polypeptide: Rhamnulokinase (489 aa).

Position 13 to 17 (13 to 17 (ASSGR)) interacts with ATP. Cys68 and Cys222 form a disulfide bridge. Residues Gly83 and 236-238 (HDT) each bind substrate. Asp237 (proton acceptor) is an active-site residue. Position 259 (Thr259) interacts with ATP. Asn296 is a binding site for substrate. Position 304 (Gln304) interacts with ATP. Cys353 and Cys370 are disulfide-bonded. Gly402 is a binding site for ATP. Cysteines 413 and 417 form a disulfide.

The protein belongs to the rhamnulokinase family. The cofactor is Mg(2+).

It catalyses the reaction L-rhamnulose + ATP = L-rhamnulose 1-phosphate + ADP + H(+). It participates in carbohydrate degradation; L-rhamnose degradation; glycerone phosphate from L-rhamnose: step 2/3. Involved in the catabolism of L-rhamnose (6-deoxy-L-mannose). Catalyzes the transfer of the gamma-phosphate group from ATP to the 1-hydroxyl group of L-rhamnulose to yield L-rhamnulose 1-phosphate. In Enterobacter sp. (strain 638), this protein is Rhamnulokinase.